Here is a 157-residue protein sequence, read N- to C-terminus: 2-C-methyl-D-erythritol 2,4-cyclodiphosphate synthase (157 aa).

The a divalent metal cation site is built by D8 and H10. Residues 8–10 (DVH) and 34–35 (HS) contribute to the 4-CDP-2-C-methyl-D-erythritol 2-phosphate site. H42 provides a ligand contact to a divalent metal cation. 4-CDP-2-C-methyl-D-erythritol 2-phosphate is bound by residues 56 to 58 (DIG), 132 to 135 (TTNE), and R142.

The protein belongs to the IspF family. In terms of assembly, homotrimer. A divalent metal cation serves as cofactor.

It carries out the reaction 4-CDP-2-C-methyl-D-erythritol 2-phosphate = 2-C-methyl-D-erythritol 2,4-cyclic diphosphate + CMP. It participates in isoprenoid biosynthesis; isopentenyl diphosphate biosynthesis via DXP pathway; isopentenyl diphosphate from 1-deoxy-D-xylulose 5-phosphate: step 4/6. In terms of biological role, involved in the biosynthesis of isopentenyl diphosphate (IPP) and dimethylallyl diphosphate (DMAPP), two major building blocks of isoprenoid compounds. Catalyzes the conversion of 4-diphosphocytidyl-2-C-methyl-D-erythritol 2-phosphate (CDP-ME2P) to 2-C-methyl-D-erythritol 2,4-cyclodiphosphate (ME-CPP) with a corresponding release of cytidine 5-monophosphate (CMP). The chain is 2-C-methyl-D-erythritol 2,4-cyclodiphosphate synthase from Chlorobium luteolum (strain DSM 273 / BCRC 81028 / 2530) (Pelodictyon luteolum).